The sequence spans 614 residues: Dihydroxy-acid dehydratase (614 aa).

Residue D81 coordinates Mg(2+). C122 is a binding site for [2Fe-2S] cluster. Residues D123 and K124 each coordinate Mg(2+). K124 is subject to N6-carboxylysine. C195 contributes to the [2Fe-2S] cluster binding site. Residue E491 coordinates Mg(2+). S517 serves as the catalytic Proton acceptor.

This sequence belongs to the IlvD/Edd family. As to quaternary structure, homodimer. The cofactor is [2Fe-2S] cluster. Requires Mg(2+) as cofactor.

It carries out the reaction (2R)-2,3-dihydroxy-3-methylbutanoate = 3-methyl-2-oxobutanoate + H2O. The enzyme catalyses (2R,3R)-2,3-dihydroxy-3-methylpentanoate = (S)-3-methyl-2-oxopentanoate + H2O. The protein operates within amino-acid biosynthesis; L-isoleucine biosynthesis; L-isoleucine from 2-oxobutanoate: step 3/4. It functions in the pathway amino-acid biosynthesis; L-valine biosynthesis; L-valine from pyruvate: step 3/4. Its function is as follows. Functions in the biosynthesis of branched-chain amino acids. Catalyzes the dehydration of (2R,3R)-2,3-dihydroxy-3-methylpentanoate (2,3-dihydroxy-3-methylvalerate) into 2-oxo-3-methylpentanoate (2-oxo-3-methylvalerate) and of (2R)-2,3-dihydroxy-3-methylbutanoate (2,3-dihydroxyisovalerate) into 2-oxo-3-methylbutanoate (2-oxoisovalerate), the penultimate precursor to L-isoleucine and L-valine, respectively. This is Dihydroxy-acid dehydratase from Rhodopseudomonas palustris (strain BisA53).